The following is a 247-amino-acid chain: Large ribosomal subunit protein uL3 (247 aa).

2 disordered regions span residues 140–164 (SHRS…KMPG) and 212–247 (LPKE…KEGA). Position 151 is an N5-methylglutamine (Gln151). Positions 232-247 (DEDKAPADTPAEKEGA) are enriched in basic and acidic residues.

This sequence belongs to the universal ribosomal protein uL3 family. As to quaternary structure, part of the 50S ribosomal subunit. Forms a cluster with proteins L14 and L19. Post-translationally, methylated by PrmB.

Functionally, one of the primary rRNA binding proteins, it binds directly near the 3'-end of the 23S rRNA, where it nucleates assembly of the 50S subunit. This is Large ribosomal subunit protein uL3 from Nitrobacter winogradskyi (strain ATCC 25391 / DSM 10237 / CIP 104748 / NCIMB 11846 / Nb-255).